The chain runs to 130 residues: Histone H2A type 2-B (130 aa).

The segment at 1–22 (MSGRGKQGGKARAKAKSRSSRA) is disordered. S2 bears the N-acetylserine mark. S2 carries the phosphoserine; by RPS6KA5 modification. At R4 the chain carries Citrulline; alternate. R4 is modified (symmetric dimethylarginine; by PRMT5; alternate). K6 and K10 each carry N6-(2-hydroxyisobutyryl)lysine; alternate. At K6 the chain carries N6-(beta-hydroxybutyryl)lysine; alternate. Positions 7–19 (QGGKARAKAKSRS) are enriched in basic residues. At K10 the chain carries N6-lactoyllysine; alternate. K10 is subject to N6-succinyllysine; alternate. Glycyl lysine isopeptide (Lys-Gly) (interchain with G-Cter in ubiquitin) cross-links involve residues K14 and K16. The residue at position 37 (K37) is an N6-(2-hydroxyisobutyryl)lysine; alternate. K37 carries the N6-(beta-hydroxybutyryl)lysine; alternate modification. K37 is subject to N6-crotonyllysine; alternate. Residues K75 and K76 each carry the N6-(2-hydroxyisobutyryl)lysine modification. Residue K96 is modified to N6-(2-hydroxyisobutyryl)lysine; alternate. K96 is modified (N6-succinyllysine; alternate). Residue K96 is modified to N6-glutaryllysine; alternate. Residue Q105 is modified to N5-methylglutamine. K119 is modified (N6-(2-hydroxyisobutyryl)lysine; alternate). Residues K119 and K120 each carry the N6-crotonyllysine; alternate modification. N6-glutaryllysine; alternate occurs at positions 119 and 120. At K120 the chain carries N6-(beta-hydroxybutyryl)lysine; alternate. K120 is covalently cross-linked (Glycyl lysine isopeptide (Lys-Gly) (interchain with G-Cter in ubiquitin); alternate). T121 carries the post-translational modification Phosphothreonine; by DCAF1.

The protein belongs to the histone H2A family. In terms of assembly, the nucleosome is a histone octamer containing two molecules each of H2A, H2B, H3 and H4 assembled in one H3-H4 heterotetramer and two H2A-H2B heterodimers. The octamer wraps approximately 147 bp of DNA. Post-translationally, deiminated on Arg-4 in granulocytes upon calcium entry. Monoubiquitination of Lys-120 (H2AK119Ub) by RING1, TRIM37 and RNF2/RING2 complex gives a specific tag for epigenetic transcriptional repression and participates in X chromosome inactivation of female mammals. It is involved in the initiation of both imprinted and random X inactivation. Ubiquitinated H2A is enriched in inactive X chromosome chromatin. Ubiquitination of H2A functions downstream of methylation of 'Lys-27' of histone H3 (H3K27me). H2AK119Ub by RNF2/RING2 can also be induced by ultraviolet and may be involved in DNA repair. Following DNA double-strand breaks (DSBs), it is ubiquitinated through 'Lys-63' linkage of ubiquitin moieties by the E2 ligase UBE2N and the E3 ligases RNF8 and RNF168, leading to the recruitment of repair proteins to sites of DNA damage. Ubiquitination at Lys-14 and Lys-16 (H2AK13Ub and H2AK15Ub, respectively) in response to DNA damage is initiated by RNF168 that mediates monoubiquitination at these 2 sites, and 'Lys-63'-linked ubiquitin are then conjugated to monoubiquitin; RNF8 is able to extend 'Lys-63'-linked ubiquitin chains in vitro. Deubiquitinated by USP51 at Lys-14 and Lys-16 (H2AK13Ub and H2AK15Ub, respectively) after damaged DNA is repaired. H2AK119Ub and ionizing radiation-induced 'Lys-63'-linked ubiquitination (H2AK13Ub and H2AK15Ub) are distinct events. In terms of processing, phosphorylation on Ser-2 (H2AS1ph) is enhanced during mitosis. Phosphorylation on Ser-2 by RPS6KA5/MSK1 directly represses transcription. Acetylation of H3 inhibits Ser-2 phosphorylation by RPS6KA5/MSK1. Phosphorylation at Thr-121 (H2AT120ph) by DCAF1 is present in the regulatory region of many tumor suppresor genes and down-regulates their transcription. Post-translationally, symmetric dimethylation on Arg-4 by the PRDM1/PRMT5 complex may play a crucial role in the germ-cell lineage. Glutamine methylation at Gln-105 (H2AQ104me) by FBL is specifically dedicated to polymerase I. It is present at 35S ribosomal DNA locus and impairs binding of the FACT complex. In terms of processing, crotonylation (Kcr) is specifically present in male germ cells and marks testis-specific genes in post-meiotic cells, including X-linked genes that escape sex chromosome inactivation in haploid cells. Crotonylation marks active promoters and enhancers and confers resistance to transcriptional repressors. It is also associated with post-meiotically activated genes on autosomes. Post-translationally, hydroxybutyrylation of histones is induced by starvation. Lactylated in macrophages by EP300/P300 by using lactoyl-CoA directly derived from endogenous or exogenous lactate, leading to stimulates gene transcription.

It localises to the nucleus. It is found in the chromosome. In terms of biological role, core component of nucleosome. Nucleosomes wrap and compact DNA into chromatin, limiting DNA accessibility to the cellular machineries which require DNA as a template. Histones thereby play a central role in transcription regulation, DNA repair, DNA replication and chromosomal stability. DNA accessibility is regulated via a complex set of post-translational modifications of histones, also called histone code, and nucleosome remodeling. The polypeptide is Histone H2A type 2-B (Mus musculus (Mouse)).